The following is a 408-amino-acid chain: Putative transporter AmpG 2 (408 aa).

The next 11 membrane-spanning stretches (helical) occupy residues 11 to 31 (IFNI…YLLT), 49 to 69 (IGLF…GPLL), 84 to 104 (YCLV…TSFN), 110 to 130 (IPFV…DMLI), 154 to 174 (FRIG…IISW), 177 to 197 (VYRT…FYPL), 224 to 244 (CIVI…LSIM), 261 to 281 (VGYK…GGFL), 294 to 311 (VLIY…LYFL), 353 to 373 (IALI…ISGY), and 382 to 402 (YFFI…LYLP).

It belongs to the major facilitator superfamily.

It is found in the cell inner membrane. In Rickettsia prowazekii (strain Madrid E), this protein is Putative transporter AmpG 2 (ampG2).